A 576-amino-acid chain; its full sequence is Low-affinity glucose transporter HXT4 (576 aa).

Positions 1-56 (MSEEAAYQEDTAVQNTPADALSPVESDSNSALSTPSNKAERDDMKDFDENHEESNN) are disordered. The Cytoplasmic segment spans residues 1–66 (MSEEAAYQED…YVEIPKKPAS (66 aa)). The span at 25 to 37 (ESDSNSALSTPSN) shows a compositional bias: polar residues. Over residues 38 to 54 (KAERDDMKDFDENHEES) the composition is skewed to basic and acidic residues. Residue Lys45 forms a Glycyl lysine isopeptide (Lys-Gly) (interchain with G-Cter in ubiquitin) linkage. A helical transmembrane segment spans residues 67–87 (AYVTVSICCLMVAFGGFVFGW). At 88-122 (DTGTISGFVAQTDFIRRFGMKHHDGTYYLSKVRTG) the chain is on the extracellular side. Residues 123–143 (LIVSIFNIGCAIGGIILARLG) form a helical membrane-spanning segment. Residues 144 to 149 (DMYGRK) are Cytoplasmic-facing. Residues 150–170 (MGLIVVVVIYIIGIIIQIASI) form a helical membrane-spanning segment. Topologically, residues 171-180 (NKWYQYFIGR) are extracellular. The helical transmembrane segment at 181-201 (IISGLGVGGIAVLSPMLISEV) threads the bilayer. The Cytoplasmic portion of the chain corresponds to 202–207 (SPKHIR). The chain crosses the membrane as a helical span at residues 208 to 228 (GTLVSCYQLMITLGIFLGYCT). Topologically, residues 229–242 (NYGTKTYTNSVQWR) are extracellular. Residues 243 to 263 (VPLGLGFAWALFMIGGMTFVP) traverse the membrane as a helical segment. Residues 264-346 (ESPRYLVEVG…IQSLQQLTGD (83 aa)) lie on the Cytoplasmic side of the membrane. The helical transmembrane segment at 347 to 363 (NYFFYYGTTVFTAVGLE) threads the bilayer. Residues 364 to 369 (DSFETS) are Extracellular-facing. A helical transmembrane segment spans residues 370–387 (IVLGIVNFASTFVGIFLV). Residues 388-394 (ERYGRRR) are Cytoplasmic-facing. A helical transmembrane segment spans residues 395 to 415 (CLLWGAASMTACMVVFASVGV). At 416 to 437 (TRLWPNGKKNGSSKGAGNCMIV) the chain is on the extracellular side. Asn425 carries N-linked (GlcNAc...) asparagine glycosylation. Residues 438 to 458 (FTCFYLFCFATTWAPIPFVVN) traverse the membrane as a helical segment. Over 459-475 (SETFPLRVKSKCMAIAQ) the chain is Cytoplasmic. Residues 476–496 (ACNWIWGFLIGFFTPFISGAI) form a helical membrane-spanning segment. Residue Asp497 is a topological domain, extracellular. A helical membrane pass occupies residues 498 to 518 (FYYGYVFMGCLVFSYFYVFFF). The Cytoplasmic portion of the chain corresponds to 519–576 (VPETKGLTLEEVNTLWEEGVLPWKSPSWVPPNKRGTDYNADDLMHDDQPFYKKMFGKK).

The protein belongs to the major facilitator superfamily. Sugar transporter (TC 2.A.1.1) family.

The protein resides in the cell membrane. With respect to regulation, xylose uptake is strongly inhibited by glucose. Functionally, low-affinity glucose transporter. Can also transport xylose. The protein is Low-affinity glucose transporter HXT4 (HXT4) of Saccharomyces cerevisiae (strain YJM789) (Baker's yeast).